Reading from the N-terminus, the 882-residue chain is DNA mismatch repair protein MutS (882 aa).

635 to 642 (GPNMGGKS) is an ATP binding site.

It belongs to the DNA mismatch repair MutS family.

Functionally, this protein is involved in the repair of mismatches in DNA. It is possible that it carries out the mismatch recognition step. This protein has a weak ATPase activity. The polypeptide is DNA mismatch repair protein MutS (Janthinobacterium sp. (strain Marseille) (Minibacterium massiliensis)).